The chain runs to 232 residues: Triosephosphate isomerase (232 aa).

6-8 serves as a coordination point for substrate; sequence NLK. Catalysis depends on His-91, which acts as the Electrophile. The Proton acceptor role is filled by Glu-158. Substrate is bound by residues Gly-164 and Ser-194.

This sequence belongs to the triosephosphate isomerase family. In terms of assembly, homodimer.

It is found in the cytoplasm. It catalyses the reaction D-glyceraldehyde 3-phosphate = dihydroxyacetone phosphate. Its pathway is carbohydrate biosynthesis; gluconeogenesis. It functions in the pathway carbohydrate degradation; glycolysis; D-glyceraldehyde 3-phosphate from glycerone phosphate: step 1/1. In terms of biological role, involved in the gluconeogenesis. Catalyzes stereospecifically the conversion of dihydroxyacetone phosphate (DHAP) to D-glyceraldehyde-3-phosphate (G3P). The polypeptide is Triosephosphate isomerase (Campylobacter hominis (strain ATCC BAA-381 / DSM 21671 / CCUG 45161 / LMG 19568 / NCTC 13146 / CH001A)).